The primary structure comprises 298 residues: uncharacterized protein (298 aa).

Aspartate 119 is an active-site residue.

It belongs to the pseudouridine synthase RluA family.

The enzyme catalyses a uridine in RNA = a pseudouridine in RNA. This is an uncharacterized protein from Helicobacter pylori (strain ATCC 700392 / 26695) (Campylobacter pylori).